Consider the following 286-residue polypeptide: ATP synthase gamma chain (286 aa).

The protein belongs to the ATPase gamma chain family. As to quaternary structure, F-type ATPases have 2 components, CF(1) - the catalytic core - and CF(0) - the membrane proton channel. CF(1) has five subunits: alpha(3), beta(3), gamma(1), delta(1), epsilon(1). CF(0) has three main subunits: a, b and c.

The protein resides in the cell inner membrane. Functionally, produces ATP from ADP in the presence of a proton gradient across the membrane. The gamma chain is believed to be important in regulating ATPase activity and the flow of protons through the CF(0) complex. The sequence is that of ATP synthase gamma chain from Shewanella frigidimarina (strain NCIMB 400).